Here is a 364-residue protein sequence, read N- to C-terminus: Dual-specificity RNA methyltransferase RlmN (364 aa).

The active-site Proton acceptor is Glu-91. Residues 97–333 (EDDRGTLCVS…VTVRKTRGDD (237 aa)) form the Radical SAM core domain. A disulfide bridge connects residues Cys-104 and Cys-338. Positions 111, 115, and 118 each coordinate [4Fe-4S] cluster. S-adenosyl-L-methionine-binding positions include 164-165 (GE), Ser-196, 218-220 (SLH), and Asn-295. Catalysis depends on Cys-338, which acts as the S-methylcysteine intermediate.

It belongs to the radical SAM superfamily. RlmN family. [4Fe-4S] cluster serves as cofactor.

The protein resides in the cytoplasm. The enzyme catalyses adenosine(2503) in 23S rRNA + 2 reduced [2Fe-2S]-[ferredoxin] + 2 S-adenosyl-L-methionine = 2-methyladenosine(2503) in 23S rRNA + 5'-deoxyadenosine + L-methionine + 2 oxidized [2Fe-2S]-[ferredoxin] + S-adenosyl-L-homocysteine. The catalysed reaction is adenosine(37) in tRNA + 2 reduced [2Fe-2S]-[ferredoxin] + 2 S-adenosyl-L-methionine = 2-methyladenosine(37) in tRNA + 5'-deoxyadenosine + L-methionine + 2 oxidized [2Fe-2S]-[ferredoxin] + S-adenosyl-L-homocysteine. Functionally, specifically methylates position 2 of adenine 2503 in 23S rRNA and position 2 of adenine 37 in tRNAs. m2A2503 modification seems to play a crucial role in the proofreading step occurring at the peptidyl transferase center and thus would serve to optimize ribosomal fidelity. The polypeptide is Dual-specificity RNA methyltransferase RlmN (Chromobacterium violaceum (strain ATCC 12472 / DSM 30191 / JCM 1249 / CCUG 213 / NBRC 12614 / NCIMB 9131 / NCTC 9757 / MK)).